A 417-amino-acid polypeptide reads, in one-letter code: Probable tubulin polyglutamylase ttll-9 (417 aa).

The TTL domain occupies 23 to 372 (QRKKKILFKC…EKKLIGNENE (350 aa)). ATP contacts are provided by residues 188–191 (QCYV), K201, and D203.

The protein belongs to the tubulin--tyrosine ligase family. As to expression, expressed in head sensory neurons.

Its function is as follows. Polyglutamylase that forms polyglutamate side chains on tubulin. Acts when complexed with other proteins. Appears to be dispensable for polar spindle formation in dividing embryonic cells, for cilia-dependent osmotic avoidance and for male mating behavior. Probably by regulating microtubule stability via the glutamylation of tubulin, regulates PLM axon developmental growth. The sequence is that of Probable tubulin polyglutamylase ttll-9 from Caenorhabditis elegans.